We begin with the raw amino-acid sequence, 56 residues long: Large ribosomal subunit protein bL32 (56 aa).

This sequence belongs to the bacterial ribosomal protein bL32 family.

This is Large ribosomal subunit protein bL32 from Brevibacillus brevis (strain 47 / JCM 6285 / NBRC 100599).